Here is a 723-residue protein sequence, read N- to C-terminus: BBSome complex assembly protein BBS10 (723 aa).

The protein belongs to the TCP-1 chaperonin family. Component of a complex composed at least of MKKS, BBS10, BBS12, TCP1, CCT2, CCT3, CCT4, CCT5 and CCT8.

The protein resides in the cell projection. Its subcellular location is the cilium. Its function is as follows. Probable molecular chaperone that assists the folding of proteins upon ATP hydrolysis. Plays a role in the assembly of BBSome, a complex involved in ciliogenesis regulating transports vesicles to the cilia. Involved in adipogenic differentiation. This is BBSome complex assembly protein BBS10 (BBS10) from Homo sapiens (Human).